We begin with the raw amino-acid sequence, 217 residues long: Adenylate kinase (217 aa).

10-15 (GAGKGT) lines the ATP pocket. The interval 30–59 (STGDMFREAIKRGTPLGRQAEVYIKGGRLV) is NMP. AMP-binding positions include threonine 31, arginine 36, 57–59 (RLV), 85–88 (GFPR), and glutamine 92. Residues 126-163 (GRRVCRQCGATYHVRYNPPAVPGKCDACGQDLVQRADD) are LID. An ATP-binding site is contributed by arginine 127. Zn(2+) is bound by residues cysteine 130 and cysteine 133. 136 to 137 (TY) serves as a coordination point for ATP. Zn(2+) is bound by residues cysteine 150 and cysteine 153. Residues arginine 160 and arginine 171 each coordinate AMP. Residue glutamine 199 coordinates ATP.

Belongs to the adenylate kinase family. As to quaternary structure, monomer.

It is found in the cytoplasm. The catalysed reaction is AMP + ATP = 2 ADP. It participates in purine metabolism; AMP biosynthesis via salvage pathway; AMP from ADP: step 1/1. Catalyzes the reversible transfer of the terminal phosphate group between ATP and AMP. Plays an important role in cellular energy homeostasis and in adenine nucleotide metabolism. In Moorella thermoacetica (strain ATCC 39073 / JCM 9320), this protein is Adenylate kinase.